We begin with the raw amino-acid sequence, 188 residues long: Large ribosomal subunit protein uL5 (188 aa).

This sequence belongs to the universal ribosomal protein uL5 family. In terms of assembly, part of the 50S ribosomal subunit; part of the 5S rRNA/L5/L18/L25 subcomplex. Contacts the 5S rRNA and the P site tRNA. Forms a bridge to the 30S subunit in the 70S ribosome.

Functionally, this is one of the proteins that bind and probably mediate the attachment of the 5S RNA into the large ribosomal subunit, where it forms part of the central protuberance. In the 70S ribosome it contacts protein S13 of the 30S subunit (bridge B1b), connecting the 2 subunits; this bridge is implicated in subunit movement. Contacts the P site tRNA; the 5S rRNA and some of its associated proteins might help stabilize positioning of ribosome-bound tRNAs. This chain is Large ribosomal subunit protein uL5, found in Aquifex pyrophilus.